The chain runs to 423 residues: Putative transmembrane protein ORF103 (423 aa).

The span at 43–57 shows a compositional bias: basic and acidic residues; sequence EPKIEQEEPQQKPEV. The tract at residues 43-91 is disordered; it reads EPKIEQEEPQQKPEVVDVYSNETDKNEEEVSIITSEDEEEDEKGMLFKR. The span at 67–84 shows a compositional bias: acidic residues; sequence KNEEEVSIITSEDEEEDE. The next 2 membrane-spanning stretches (helical) occupy residues 125-145 and 162-182; these read IIGI…VAVL and FSLC…GLAI. The tract at residues 253–282 is disordered; it reads DESGSEVSSEDEESDQETLLRNRKMPTNSK. 2 helical membrane-spanning segments follow: residues 326-346 and 366-386; these read LISA…IVGS and IPTL…MCVL.

It is found in the host membrane. This is Putative transmembrane protein ORF103 from Magallana gigas (Pacific oyster).